The following is a 173-amino-acid chain: Large ribosomal subunit protein uL10 (173 aa).

The protein belongs to the universal ribosomal protein uL10 family. As to quaternary structure, part of the ribosomal stalk of the 50S ribosomal subunit. The N-terminus interacts with L11 and the large rRNA to form the base of the stalk. The C-terminus forms an elongated spine to which L12 dimers bind in a sequential fashion forming a multimeric L10(L12)X complex.

Forms part of the ribosomal stalk, playing a central role in the interaction of the ribosome with GTP-bound translation factors. This chain is Large ribosomal subunit protein uL10, found in Cupriavidus pinatubonensis (strain JMP 134 / LMG 1197) (Cupriavidus necator (strain JMP 134)).